The primary structure comprises 358 residues: Gibberellin receptor GID1B (358 aa).

Residue A2 is modified to N-acetylalanine. An Involved in the stabilization of the negatively charged intermediate by the formation of the oxyanion hole motif is present at residues 113–115; the sequence is HGG. Residues 115–116, Y127, and S191 each bind gibberellin A4; that span reads GS. Residues S116, Y127, S191, and F238 each coordinate gibberellin A3. S191 is an active-site residue. D289 is a catalytic residue. G320 is a binding site for gibberellin A4. A gibberellin A3-binding site is contributed by G320.

This sequence belongs to the 'GDXG' lipolytic enzyme family. Interacts with the DELLA proteins GAI, RGA, RGL1, RGL2 and RGL3 in a GA-dependent manner. Widely expressed.

It is found in the nucleus. Functions as a soluble gibberellin (GA) receptor. GA is an essential hormone that regulates growth and development in plants. Binds with high affinity the biologically active gibberellin GA4, but has no affinity for the biologically inactive GAs. In response to GA, interacts with specific DELLA proteins, known as repressors of GA-induced growth, and targets them for degradation via proteasome. Seems to be required for GA signaling that controls root growth, seed germination and flower development. May function as a dominant GA receptor at low GA concentrations in germination. Partially redundant with GID1A and GID1C. This is Gibberellin receptor GID1B (GID1B) from Arabidopsis thaliana (Mouse-ear cress).